A 395-amino-acid chain; its full sequence is Renin (395 aa).

Positions 1-21 (MLRSWEFVLLISCFLCFSSDA) are cleaved as a signal peptide. The propeptide at 22-43 (LQRISLKKMPSIRETLQEMGMK) is activation peptide. An N-linked (GlcNAc...) asparagine glycan is attached at asparagine 64. Residues 79–392 (YYGEISIGTP…DRQNNRIGFA (314 aa)) form the Peptidase A1 domain. Aspartate 97 is an active-site residue. 2 disulfides stabilise this stretch: cysteine 110-cysteine 117 and cysteine 274-cysteine 278. Aspartate 283 is a catalytic residue. The cysteines at positions 316 and 351 are disulfide-linked.

Belongs to the peptidase A1 family. Post-translationally, N-glycosylated. In terms of tissue distribution, expressed by the venom gland (at protein level).

It is found in the secreted. The enzyme catalyses Cleavage of Leu-|-Xaa bond in angiotensinogen to generate angiotensin I.. Its activity is regulated as follows. Inhibited completely by aspartyl protease inhibitor pepstatin A, but not by the serine- or metalloproteinase inhibitors PMSF or EDTA. Functionally, renin is a highly specific endopeptidase, whose only known function is to generate angiotensin I from angiotensinogen in the plasma, initiating a cascade of reactions that produce an elevation of blood pressure and increased sodium retention by the kidney. This protein is also found in snake venom and shown to specifically cleave human and porcine angiotensinogen into angiotensin I. It does not have general protease activity, no cleavage of alpha or beta casein. May be directly responsible for elevation of blood pressure in the victims of envenomation. The protein is Renin of Echis ocellatus (Ocellated saw-scaled viper).